The following is a 185-amino-acid chain: Elongation factor P (185 aa).

The protein belongs to the elongation factor P family.

Its subcellular location is the cytoplasm. It participates in protein biosynthesis; polypeptide chain elongation. Involved in peptide bond synthesis. Stimulates efficient translation and peptide-bond synthesis on native or reconstituted 70S ribosomes in vitro. Probably functions indirectly by altering the affinity of the ribosome for aminoacyl-tRNA, thus increasing their reactivity as acceptors for peptidyl transferase. The protein is Elongation factor P of Carboxydothermus hydrogenoformans (strain ATCC BAA-161 / DSM 6008 / Z-2901).